The sequence spans 208 residues: Uracil phosphoribosyltransferase (208 aa).

Residues R78, R103, and 130 to 138 (DPMLATGGS) contribute to the 5-phospho-alpha-D-ribose 1-diphosphate site. Residues I193 and 198 to 200 (GDA) each bind uracil. Residue D199 coordinates 5-phospho-alpha-D-ribose 1-diphosphate.

The protein belongs to the UPRTase family. Requires Mg(2+) as cofactor.

It carries out the reaction UMP + diphosphate = 5-phospho-alpha-D-ribose 1-diphosphate + uracil. It functions in the pathway pyrimidine metabolism; UMP biosynthesis via salvage pathway; UMP from uracil: step 1/1. Allosterically activated by GTP. Its function is as follows. Catalyzes the conversion of uracil and 5-phospho-alpha-D-ribose 1-diphosphate (PRPP) to UMP and diphosphate. The polypeptide is Uracil phosphoribosyltransferase (Shewanella putrefaciens (strain CN-32 / ATCC BAA-453)).